A 412-amino-acid polypeptide reads, in one-letter code: Serine hydroxymethyltransferase (412 aa).

(6S)-5,6,7,8-tetrahydrofolate is bound by residues Leu117 and 121–123 (GHL). The residue at position 226 (Lys226) is an N6-(pyridoxal phosphate)lysine. 349–351 (SPF) lines the (6S)-5,6,7,8-tetrahydrofolate pocket.

The protein belongs to the SHMT family. In terms of assembly, homodimer. Pyridoxal 5'-phosphate serves as cofactor.

The protein localises to the cytoplasm. The enzyme catalyses (6R)-5,10-methylene-5,6,7,8-tetrahydrofolate + glycine + H2O = (6S)-5,6,7,8-tetrahydrofolate + L-serine. It functions in the pathway one-carbon metabolism; tetrahydrofolate interconversion. The protein operates within amino-acid biosynthesis; glycine biosynthesis; glycine from L-serine: step 1/1. In terms of biological role, catalyzes the reversible interconversion of serine and glycine with tetrahydrofolate (THF) serving as the one-carbon carrier. This reaction serves as the major source of one-carbon groups required for the biosynthesis of purines, thymidylate, methionine, and other important biomolecules. Also exhibits THF-independent aldolase activity toward beta-hydroxyamino acids, producing glycine and aldehydes, via a retro-aldol mechanism. This chain is Serine hydroxymethyltransferase, found in Nitratidesulfovibrio vulgaris (strain DSM 19637 / Miyazaki F) (Desulfovibrio vulgaris).